A 903-amino-acid polypeptide reads, in one-letter code: Protein translocase subunit SecA (903 aa).

ATP-binding positions include Gln89, 107–111, and Asp502; that span reads GEGKT. Zn(2+) contacts are provided by Cys886, Cys888, Cys897, and His898.

This sequence belongs to the SecA family. As to quaternary structure, monomer and homodimer. Part of the essential Sec protein translocation apparatus which comprises SecA, SecYEG and auxiliary proteins SecDF-YajC and YidC. Requires Zn(2+) as cofactor.

It localises to the cell inner membrane. It is found in the cytoplasm. It catalyses the reaction ATP + H2O + cellular proteinSide 1 = ADP + phosphate + cellular proteinSide 2.. Functionally, part of the Sec protein translocase complex. Interacts with the SecYEG preprotein conducting channel. Has a central role in coupling the hydrolysis of ATP to the transfer of proteins into and across the cell membrane, serving both as a receptor for the preprotein-SecB complex and as an ATP-driven molecular motor driving the stepwise translocation of polypeptide chains across the membrane. The sequence is that of Protein translocase subunit SecA from Rhizobium meliloti (strain 1021) (Ensifer meliloti).